The primary structure comprises 30 residues: Hainantoxin F6-34.84 (30 aa).

2 cysteine pairs are disulfide-bonded: Cys2–Cys15 and Cys9–Cys24.

This sequence belongs to the AVIT (prokineticin) family. Expressed by the venom gland.

The protein localises to the secreted. The polypeptide is Hainantoxin F6-34.84 (Cyriopagopus hainanus (Chinese bird spider)).